A 134-amino-acid polypeptide reads, in one-letter code: Cytochrome b (134 aa).

3 helical membrane-spanning segments follow: residues 33–53 (FGSL…FLAM), 77–98 (WILR…FLHV), and 113–133 (WNIG…GYVL). Residues histidine 83 and histidine 97 each contribute to the heme b site.

It belongs to the cytochrome b family. As to quaternary structure, the cytochrome bc1 complex contains 11 subunits: 3 respiratory subunits (MT-CYB, CYC1 and UQCRFS1), 2 core proteins (UQCRC1 and UQCRC2) and 6 low-molecular weight proteins (UQCRH/QCR6, UQCRB/QCR7, UQCRQ/QCR8, UQCR10/QCR9, UQCR11/QCR10 and a cleavage product of UQCRFS1). This cytochrome bc1 complex then forms a dimer. Requires heme b as cofactor.

It localises to the mitochondrion inner membrane. In terms of biological role, component of the ubiquinol-cytochrome c reductase complex (complex III or cytochrome b-c1 complex) that is part of the mitochondrial respiratory chain. The b-c1 complex mediates electron transfer from ubiquinol to cytochrome c. Contributes to the generation of a proton gradient across the mitochondrial membrane that is then used for ATP synthesis. This Rhinolophus hipposideros (Lesser horseshoe bat) protein is Cytochrome b (MT-CYB).